The following is a 620-amino-acid chain: MQVSKRMLAGGVRSMPSPLLACWQPILLLVLGSVLSGSATGCPPRCECSAQDRAVLCHRKRFVAVPEGIPTETRLLDLGKNRIKTLNQDEFASFPHLEELELNENIVSAVEPGAFNNLFNLRTLGLRSNRLKLIPLGVFTGLSNLTKLDISENKIVILLDYMFQDLYNLKSLEVGDNDLVYISHRAFSGLNSLEQLTLEKCNLTSIPTEALSHLHGLIVLRLRHLNINAIRDYSFKRLYRLKVLEISHWPYLDTMTPNCLYGLNLTSLSITHCNLTAVPYLAVRHLVYLRFLNLSYNPISTIEGSMLHELLRLQEIQLVGGQLAVVEPYAFRGLNYLRVLNVSGNQLTTLEESVFHSVGNLETLILDSNPLACDCRLLWVFRRRWRLNFNRQQPTCATPEFVQGKEFKDFPDVLLPNYFTCRRARIRDRKAQQVFVDEGHTVQFVCRADGDPPPAILWLSPRKHLVSAKSNGRLTVFPDGTLEVRYAQVQDNGTYLCIAANAGGNDSMPAHLHVRSYSPDWPHQPNKTFAFISNQPGEGEANSTRATVPFPFDIKTLIIATTMGFISFLGVVLFCLVLLFLWSRGKGNTKHNIEIEYVPRKSDAGISSADAPRKFNMKMI.

A signal peptide spans 1–41 (MQVSKRMLAGGVRSMPSPLLACWQPILLLVLGSVLSGSATG). Cystine bridges form between Cys-42/Cys-48 and Cys-46/Cys-57. One can recognise an LRRNT domain in the interval 42-71 (CPPRCECSAQDRAVLCHRKRFVAVPEGIPT). At 42 to 561 (CPPRCECSAQ…FDIKTLIIAT (520 aa)) the chain is on the extracellular side. 11 LRR repeats span residues 72-93 (ETRL…EFAS), 96-117 (HLEE…AFNN), 120-141 (NLRT…VFTG), 144-165 (NLTK…MFQD), 168-189 (NLKS…AFSG), 192-213 (SLEQ…ALSH), 216-237 (GLIV…SFKR), 264-285 (NLTS…AVRH), 288-309 (YLRF…MLHE), 312-333 (RLQE…AFRG), and 336-357 (YLRV…VFHS). Asn-144 carries N-linked (GlcNAc...) asparagine glycosylation. Asn-202 is a glycosylation site (N-linked (GlcNAc...) asparagine). 3 N-linked (GlcNAc...) asparagine glycosylation sites follow: Asn-264, Asn-274, and Asn-293. Asn-341 carries N-linked (GlcNAc...) asparagine glycosylation. Residues 369-423 (NPLACDCRLLWVFRRRWRLNFNRQQPTCATPEFVQGKEFKDFPDVLLPNYFTCRR) enclose the LRRCT domain. Cystine bridges form between Cys-373/Cys-396, Cys-375/Cys-421, and Cys-446/Cys-497. The 103-residue stretch at 411 to 513 (PDVLLPNYFT…GNDSMPAHLH (103 aa)) folds into the Ig-like C2-type domain. Asn-492, Asn-505, Asn-526, and Asn-542 each carry an N-linked (GlcNAc...) asparagine glycan. The chain crosses the membrane as a helical span at residues 562–582 (TMGFISFLGVVLFCLVLLFLW). The Cytoplasmic segment spans residues 583–620 (SRGKGNTKHNIEIEYVPRKSDAGISSADAPRKFNMKMI). The residue at position 602 (Ser-602) is a Phosphoserine.

In terms of assembly, homotetramer. Forms a ternary complex with RTN4R/NGFR and RTN4R/TNFRSF19. Interacts with NGRF and MYT1L. Interacts with RTN4R. In terms of processing, N-glycosylated. Contains predominantly high-mannose glycans. Expressed exclusively in the central nervous system. Highest level in the in amygdala, hippocampus, thalamus and cerebral cortex. In the rest of the brain a basal expression seems to be always present. Up-regulated in substantia nigra neurons from Parkinson disease patients.

The protein localises to the cell membrane. Functionally, functional component of the Nogo receptor signaling complex (RTN4R/NGFR) in RhoA activation responsible for some inhibition of axonal regeneration by myelin-associated factors. Is also an important negative regulator of oligodentrocyte differentiation and axonal myelination. Acts in conjunction with RTN4 and RTN4R in regulating neuronal precursor cell motility during cortical development. The polypeptide is Leucine-rich repeat and immunoglobulin-like domain-containing nogo receptor-interacting protein 1 (LINGO1) (Homo sapiens (Human)).